A 232-amino-acid polypeptide reads, in one-letter code: Cysteine proteinase inhibitor 7 (232 aa).

An N-terminal signal peptide occupies residues 1-29; sequence MDMRRASMCMMLICVSLVLLSGFGQFVIC. Cystatin domains follow at residues 46–135 and 152–214; these read GGFS…KNII and FDWR…ERGN. Residues 91 to 95 carry the Secondary area of contact motif; sequence QVVAG. Position 181 is a phosphoserine (Ser181).

This sequence belongs to the cystatin family. Phytocystatin subfamily.

Its subcellular location is the secreted. Its function is as follows. Specific inhibitor of cysteine proteinases. Probably involved in the regulation of endogenous processes and in defense against pests and pathogens. The chain is Cysteine proteinase inhibitor 7 (CYS7) from Arabidopsis thaliana (Mouse-ear cress).